We begin with the raw amino-acid sequence, 99 residues long: Putative septation protein SpoVG (99 aa).

Belongs to the SpoVG family.

In terms of biological role, could be involved in septation. This is Putative septation protein SpoVG from Exiguobacterium sp. (strain ATCC BAA-1283 / AT1b).